The chain runs to 453 residues: Methionine aminopeptidase 2-1 (453 aa).

Basic and acidic residues predominate over residues 1 to 12 (MGSKTPDGHRQS). The segment at 1–101 (MGSKTPDGHR…TTPPRVPLST (101 aa)) is disordered. Over residues 46 to 57 (GEDDDDDDENEE) the composition is skewed to acidic residues. Positions 67-82 (KKKKRKKSKKKNKKSK) are enriched in basic residues. His210 lines the substrate pocket. Residues Asp231, Asp242, and His306 each contribute to the a divalent metal cation site. Position 314 (His314) interacts with substrate. Residues Glu339 and Glu434 each coordinate a divalent metal cation.

It belongs to the peptidase M24A family. Methionine aminopeptidase eukaryotic type 2 subfamily. The cofactor is Co(2+). It depends on Zn(2+) as a cofactor. Mn(2+) is required as a cofactor. Fe(2+) serves as cofactor.

The protein resides in the cytoplasm. It carries out the reaction Release of N-terminal amino acids, preferentially methionine, from peptides and arylamides.. Cotranslationally removes the N-terminal methionine from nascent proteins. The N-terminal methionine is often cleaved when the second residue in the primary sequence is small and uncharged (Met-Ala-, Cys, Gly, Pro, Ser, Thr, or Val). This chain is Methionine aminopeptidase 2-1, found in Aspergillus terreus (strain NIH 2624 / FGSC A1156).